The sequence spans 63 residues: MAACFVCNKKAVYGKSVTFSAERNSRVFKPNLQSVKIRMPDGSTKRVMVCTKCLKAGKVVKAV.

This sequence belongs to the bacterial ribosomal protein bL28 family.

The polypeptide is Large ribosomal subunit protein bL28 (Hydrogenobaculum sp. (strain Y04AAS1)).